Consider the following 166-residue polypeptide: Large ribosomal subunit protein eL14 (166 aa).

Residues 135 to 166 (KADGTPRVLKKDRRERLRAEKAKGGKKAAAKK) are disordered. Residues 146-157 (DRRERLRAEKAK) are compositionally biased toward basic and acidic residues.

The protein belongs to the eukaryotic ribosomal protein eL14 family.

The polypeptide is Large ribosomal subunit protein eL14 (RpL14) (Drosophila melanogaster (Fruit fly)).